A 147-amino-acid chain; its full sequence is MVDFTAEEKAAITRLWGKMNVEEAGGKALGRLLIVYPWTQRFFDNFGNLSSASAIMGNPKVKAHGKKVLNSFGDAVKNPDNLKGTFAKLSELHCDKLLVDSENFRLLGNVLVIVLANHFGKEFTPQVQAAWQKMATGVASAVARKYH.

Residues 3-147 (DFTAEEKAAI…VASAVARKYH (145 aa)) form the Globin domain. Heme b is bound by residues H64 and H93.

It belongs to the globin family. As to quaternary structure, heterotetramer of two alpha chains and two gamma chains in fetal hemoglobin (Hb F). As to expression, red blood cells.

Its function is as follows. Gamma chains make up the fetal hemoglobin F, in combination with alpha chains. This is Hemoglobin subunit gamma (HBG) from Trichechus manatus (Caribbean manatee).